The chain runs to 591 residues: MSLQQLKRKSLRDGWLMDGVVPSPGAEIDSPLFQTESKIQQLEKELESLQMQQLRLENPAAVQPEAKAIQTPFLNGEKIQQGGGQAGDAKEVTAGQANNTHGIIHEEQPTKEDQDMGTVLPIPAPRGKTVPKEDENQANPELKVDMEHQKVELVDLIQECPVENQTVEHVEKNKPHLDQEHTEKNQDGQHGILEFLTQDQQLGNPNLQHLDRYLITEVTVKHFEKNQAHPGQEKNQDEQHGILKYLTQDQQNENPNLGHLDQYLITEITLQSNPLENISVHDQTQSTSDQNMETKLPTDIPQQKESQSEGKIQTKDQGPEFELLYKDHSHEKGTTDQTQHQELLPSSIEPKEENPKAQDEKLDHHNESVSTVHEQKEVHDMDPRQLSTHQKSLSISEDQNQGSVSLSDPQNQDQSLALPEKGLEETPQLNLSHEVQCEEPSLMEQISISLLQSMEQNQEGADQTPKSVALEELSELLSSDMIKQSVLLSKNLEESPSTASTEETQETMCQAVIIPDLKKENSDPEVVQESSSHEPMSSTIAQSSSAEGNSSPESRPLLQKSQGTDSQQGGNTATQQEERRKKKTCQCCVVM.

4 consecutive repeats follow at residues 171–174, 183–186, 224–227, and 234–237; these read EKNK, EKNQ, and KNQD. Residues 282-293 show a composition bias toward polar residues; it reads DQTQSTSDQNME. Disordered regions lie at residues 282–317, 332–413, and 515–591; these read DQTQ…TKDQ, KGTT…QNQD, and PDLK…CVVM. Composition is skewed to basic and acidic residues over residues 306–317 and 349–383; these read SQSEGKIQTKDQ and EPKE…DMDP. 2 stretches are compositionally biased toward polar residues: residues 385–413 and 528–542; these read QLST…QNQD and QESS…TIAQ. Residues 543–554 are compositionally biased toward low complexity; it reads SSSAEGNSSPES. Over residues 559-575 the composition is skewed to polar residues; that stretch reads QKSQGTDSQQGGNTATQ. The short motif at 579-583 is the Nuclear localization signal element; it reads RRKKK. 2 S-palmitoyl cysteine lipidation sites follow: C585 and C587. C588 carries the post-translational modification Cysteine methyl ester. A lipid anchor (S-farnesyl cysteine) is attached at C588. A propeptide spans 589–591 (removed in mature form); the sequence is VVM.

Belongs to the paralemmin family. May be phosphorylated during oocyte maturation. In terms of processing, palmitoylated on Cys-585 and Cys-587 and prenylated on Cys-588; which is required for membrane association. In terms of tissue distribution, in Xenopus oocyte, in the central nervous system cells of tadpoles and adult frogs, and transiently in epithelial cells of stomach and gut of tadpoles. Highly expressed in kidney.

It localises to the cytoplasm. Its subcellular location is the nucleus. The protein resides in the cell membrane. Its function is as follows. Maternal ATP-binding protein that may have multiple functions during development, one of which may be associated with the development and maintenance of the central nervous system. This is Paralemmin-3 (palm3) from Xenopus laevis (African clawed frog).